The following is a 60-amino-acid chain: Large ribosomal subunit protein uL30 (60 aa).

Belongs to the universal ribosomal protein uL30 family. As to quaternary structure, part of the 50S ribosomal subunit.

The chain is Large ribosomal subunit protein uL30 from Baumannia cicadellinicola subsp. Homalodisca coagulata.